A 143-amino-acid polypeptide reads, in one-letter code: Large ribosomal subunit protein uL13 (143 aa).

The protein belongs to the universal ribosomal protein uL13 family. Part of the 50S ribosomal subunit.

Its function is as follows. This protein is one of the early assembly proteins of the 50S ribosomal subunit, although it is not seen to bind rRNA by itself. It is important during the early stages of 50S assembly. The chain is Large ribosomal subunit protein uL13 from Prochlorococcus marinus subsp. pastoris (strain CCMP1986 / NIES-2087 / MED4).